We begin with the raw amino-acid sequence, 435 residues long: Probable alpha-galactosidase B (435 aa).

A signal peptide spans 1–18 (MLTSLSLTALALLPSANA). The cysteines at positions 41 and 73 are disulfide-linked. A glycan (N-linked (GlcNAc...) asparagine) is linked at N81. A disulfide bridge connects residues C123 and C153. D151 (nucleophile) is an active-site residue. Residues N158 and N176 are each glycosylated (N-linked (GlcNAc...) asparagine). Position 221–225 (221–225 (DWGQA)) interacts with substrate. An N-linked (GlcNAc...) asparagine glycan is attached at N232. The Proton donor role is filled by D243. Residue N378 is glycosylated (N-linked (GlcNAc...) asparagine).

The protein belongs to the glycosyl hydrolase 27 family.

Its subcellular location is the secreted. The catalysed reaction is Hydrolysis of terminal, non-reducing alpha-D-galactose residues in alpha-D-galactosides, including galactose oligosaccharides, galactomannans and galactolipids.. Hydrolyzes a variety of simple alpha-D-galactoside as well as more complex molecules such as oligosaccharides and polysaccharides. The protein is Probable alpha-galactosidase B (agl1) of Penicillium simplicissimum.